A 65-amino-acid polypeptide reads, in one-letter code: Large ribosomal subunit protein bL35 (65 aa).

It belongs to the bacterial ribosomal protein bL35 family.

This is Large ribosomal subunit protein bL35 from Karelsulcia muelleri (strain GWSS) (Sulcia muelleri).